Reading from the N-terminus, the 576-residue chain is Proline--tRNA ligase (576 aa).

Belongs to the class-II aminoacyl-tRNA synthetase family. ProS type 1 subfamily. Homodimer.

It localises to the cytoplasm. It catalyses the reaction tRNA(Pro) + L-proline + ATP = L-prolyl-tRNA(Pro) + AMP + diphosphate. In terms of biological role, catalyzes the attachment of proline to tRNA(Pro) in a two-step reaction: proline is first activated by ATP to form Pro-AMP and then transferred to the acceptor end of tRNA(Pro). As ProRS can inadvertently accommodate and process non-cognate amino acids such as alanine and cysteine, to avoid such errors it has two additional distinct editing activities against alanine. One activity is designated as 'pretransfer' editing and involves the tRNA(Pro)-independent hydrolysis of activated Ala-AMP. The other activity is designated 'posttransfer' editing and involves deacylation of mischarged Ala-tRNA(Pro). The misacylated Cys-tRNA(Pro) is not edited by ProRS. The polypeptide is Proline--tRNA ligase (Trichlorobacter lovleyi (strain ATCC BAA-1151 / DSM 17278 / SZ) (Geobacter lovleyi)).